The sequence spans 1003 residues: Lon protease homolog 2, peroxisomal (1003 aa).

The Lon N-terminal domain occupies 14–305 (LPCFTLVDAP…LFSTCVQDFQ (292 aa)). Residues 367–389 (DVTSPNKFLKTSSSHDEDSDSND) form a disordered region. Positions 368–377 (VTSPNKFLKT) are enriched in polar residues. Residue 520–527 (GPPGVGKT) participates in ATP binding. Positions 773–969 (SEKFGVVNGL…QPELQKLKDK (197 aa)) constitute a Lon proteolytic domain. Catalysis depends on residues serine 874 and lysine 917.

This sequence belongs to the peptidase S16 family.

The protein localises to the peroxisome matrix. The catalysed reaction is Hydrolysis of proteins in presence of ATP.. Functionally, ATP-dependent serine protease that mediates the selective degradation of misfolded and unassembled polypeptides in the peroxisomal matrix. Necessary for type 2 peroxisome targeting signal (PTS2)-containing protein processing and facilitates peroxisome matrix protein import. The chain is Lon protease homolog 2, peroxisomal from Kluyveromyces lactis (strain ATCC 8585 / CBS 2359 / DSM 70799 / NBRC 1267 / NRRL Y-1140 / WM37) (Yeast).